The chain runs to 251 residues: L,D-transpeptidase 1 (251 aa).

A signal peptide spans 1–28 (MRRVVRYLSVVVAITLMLTAESVSIATA). A L,D-TPase catalytic domain is found at 125–250 (LIGVASISAH…VTVGDPIEVV (126 aa)). Substrate-binding positions include Tyr-190 and 203–204 (SG). His-208 (proton donor/acceptor) is an active-site residue. Cys-226 acts as the Nucleophile in catalysis. Asn-228 is a binding site for substrate.

Monomer.

Its subcellular location is the periplasm. Its pathway is cell wall biogenesis; peptidoglycan biosynthesis. Is irreversibly inactivated by the beta-lactams carbapenems via the formation of a covalent adduct resulting from acylation of the catalytic Cys. Its function is as follows. Generates 3-&gt;3 cross-links in peptidoglycan, catalyzing the cleavage of the mDap(3)-D-Ala(4) bond of a tetrapeptide donor stem and the formation of a bond between the carbonyl of mDap(3) of the donor stem and the side chain of mDap(3) of the acceptor stem. Is specific for donor substrates containing a stem tetrapeptide since it cannot use pentapeptide stems. This chain is L,D-transpeptidase 1 (ldtA), found in Mycobacterium tuberculosis (strain CDC 1551 / Oshkosh).